A 64-amino-acid chain; its full sequence is DNA gyrase inhibitor YacG (64 aa).

4 residues coordinate Zn(2+): cysteine 9, cysteine 12, cysteine 28, and cysteine 32. The disordered stretch occupies residues 45 to 64 (NAIAGAPDMSDSDGWSEDQY). Residues 54–64 (SDSDGWSEDQY) show a composition bias toward acidic residues.

This sequence belongs to the DNA gyrase inhibitor YacG family. In terms of assembly, interacts with GyrB. It depends on Zn(2+) as a cofactor.

In terms of biological role, inhibits all the catalytic activities of DNA gyrase by preventing its interaction with DNA. Acts by binding directly to the C-terminal domain of GyrB, which probably disrupts DNA binding by the gyrase. This chain is DNA gyrase inhibitor YacG, found in Vibrio parahaemolyticus serotype O3:K6 (strain RIMD 2210633).